Reading from the N-terminus, the 39-residue chain is MQSIKTIRCTFCNKLLAKVGTVGYLEIKCPRCKVINFTK.

It belongs to the com family.

In Haemophilus influenzae (strain ATCC 51907 / DSM 11121 / KW20 / Rd), this protein is Mu-like prophage FluMu protein com.